We begin with the raw amino-acid sequence, 315 residues long: Methionyl-tRNA formyltransferase (315 aa).

113–116 (SLLP) provides a ligand contact to (6S)-5,6,7,8-tetrahydrofolate.

This sequence belongs to the Fmt family.

It catalyses the reaction L-methionyl-tRNA(fMet) + (6R)-10-formyltetrahydrofolate = N-formyl-L-methionyl-tRNA(fMet) + (6S)-5,6,7,8-tetrahydrofolate + H(+). Attaches a formyl group to the free amino group of methionyl-tRNA(fMet). The formyl group appears to play a dual role in the initiator identity of N-formylmethionyl-tRNA by promoting its recognition by IF2 and preventing the misappropriation of this tRNA by the elongation apparatus. This is Methionyl-tRNA formyltransferase from Escherichia coli O127:H6 (strain E2348/69 / EPEC).